The chain runs to 262 residues: Indole-3-glycerol phosphate synthase (262 aa).

It belongs to the TrpC family.

It carries out the reaction 1-(2-carboxyphenylamino)-1-deoxy-D-ribulose 5-phosphate + H(+) = (1S,2R)-1-C-(indol-3-yl)glycerol 3-phosphate + CO2 + H2O. The protein operates within amino-acid biosynthesis; L-tryptophan biosynthesis; L-tryptophan from chorismate: step 4/5. In Nitratiruptor sp. (strain SB155-2), this protein is Indole-3-glycerol phosphate synthase.